The sequence spans 291 residues: F-box protein PP2-A12 (291 aa).

Residues 25–71 form the F-box domain; that stretch reads KPGLGDLPEACVAIIVENLDPVEICRFSKLNRAFRGASWADCVWESK.

This Arabidopsis thaliana (Mouse-ear cress) protein is F-box protein PP2-A12 (P2A12).